The following is a 337-amino-acid chain: Monoacylglycerol lipase ABHD6 (337 aa).

Residues 1 to 8 (MDLDVVNM) lie on the Extracellular side of the membrane. Residues 9 to 29 (FVIAGGTLAIPILAFVASFLL) traverse the membrane as a helical; Signal-anchor for type II membrane protein segment. Over 30–337 (WPSALIRIYY…HNTDNNKKLD (308 aa)) the chain is Cytoplasmic. Residues 72–313 (PSILMLHGFS…CGHSVVMERP (242 aa)) enclose the AB hydrolase-1 domain. Residue Phe80 coordinates (9Z)-octadecenoate. Ser148 acts as the Nucleophile in catalysis. A (9Z)-octadecenoate-binding site is contributed by Met149. Residues Asp278 and His306 each act as charge relay system in the active site. His306 is a binding site for (9Z)-octadecenoate.

It belongs to the AB hydrolase superfamily.

It localises to the late endosome membrane. The protein resides in the lysosome membrane. The protein localises to the mitochondrion membrane. It catalyses the reaction Hydrolyzes glycerol monoesters of long-chain fatty acids.. It carries out the reaction 1-octanoylglycerol + H2O = octanoate + glycerol + H(+). The catalysed reaction is 1-decanoylglycerol + H2O = decanoate + glycerol + H(+). The enzyme catalyses 1-dodecanoylglycerol + H2O = dodecanoate + glycerol + H(+). It catalyses the reaction 1-tetradecanoylglycerol + H2O = tetradecanoate + glycerol + H(+). It carries out the reaction 2-hexadecanoylglycerol + H2O = glycerol + hexadecanoate + H(+). The catalysed reaction is 2-(9Z-octadecenoyl)-glycerol + H2O = glycerol + (9Z)-octadecenoate + H(+). The enzyme catalyses 1-(9Z-octadecenoyl)-glycerol + H2O = glycerol + (9Z)-octadecenoate + H(+). It catalyses the reaction 2-(9Z,12Z-octadecadienoyl)-glycerol + H2O = (9Z,12Z)-octadecadienoate + glycerol + H(+). It carries out the reaction 2-(5Z,8Z,11Z,14Z-eicosatetraenoyl)-glycerol + H2O = glycerol + (5Z,8Z,11Z,14Z)-eicosatetraenoate + H(+). The catalysed reaction is 1-(5Z,8Z,11Z,14Z-eicosatetraenoyl)-glycerol + H2O = glycerol + (5Z,8Z,11Z,14Z)-eicosatetraenoate + H(+). The enzyme catalyses 1-(9Z,12Z-octadecadienoyl)-glycerol + H2O = (9Z,12Z)-octadecadienoate + glycerol + H(+). It catalyses the reaction 3-(9Z-octadecenoyl)-sn-glycero-1-phospho-(3'-(9Z-octadecenoyl)-1'-sn-glycerol) + H2O = 3-(9Z-octadecenoyl)-sn-glycero-1-phospho-(1'-sn-glycerol) + (9Z)-octadecenoate + H(+). It carries out the reaction (S,S)-2-(9Z-octadecenoyl)-sn-glycero-1-phospho-(2'-(9Z-octadecenoyl)-1'-sn-glycerol) + H2O = (S,S)-2-(9Z-octadecenoyl)-sn-glycero-1-phospho-(1'-sn-glycerol) + (9Z)-octadecenoate + H(+). The catalysed reaction is (R,R)-2-(9Z-octadecenoyl)-sn-glycero-3-phospho-(2'-(9Z-octadecenoyl)-3'-sn-glycerol) + H2O = (R,R)-2-(9Z-octadecenoyl)-sn-glycero-3-phospho-(3'-sn-glycerol) + (9Z)-octadecenoate + H(+). Functionally, lipase that preferentially hydrolysis medium-chain saturated monoacylglycerols including 2-arachidonoylglycerol. Through 2-arachidonoylglycerol degradation may regulate endocannabinoid signaling pathways. Also has a lysophosphatidyl lipase activity with a preference for lysophosphatidylglycerol among other lysophospholipids. Also able to degrade bis(monoacylglycero)phosphate (BMP) and constitutes the major enzyme for BMP catabolism. BMP, also known as lysobisphosphatidic acid, is enriched in late endosomes and lysosomes and plays a key role in the formation of intraluminal vesicles and in lipid sorting. In Homo sapiens (Human), this protein is Monoacylglycerol lipase ABHD6.